An 87-amino-acid chain; its full sequence is U18-myrmicitoxin-Mri1a (87 aa).

The signal sequence occupies residues 1 to 32 (MKNNYNRINTFIVYLMVTFSLISIISITECTP). The EGF-like domain maps to 33–77 (NHDPCPPQYAEALCLNGGTCFSVTIMGSDNYNCICAPGFRGWRCQ). 3 disulfides stabilise this stretch: Cys37-Cys52, Cys46-Cys65, and Cys67-Cys76.

Post-translationally, O-glycosylated. Expressed by the venom gland.

It localises to the secreted. In Manica rubida (European giant red ant), this protein is U18-myrmicitoxin-Mri1a.